Consider the following 304-residue polypeptide: Signal recognition particle receptor FtsY (304 aa).

GTP-binding positions include 109 to 116, 191 to 195, and 255 to 258; these read GVNGVGKT, DTAGR, and TKLD.

Belongs to the GTP-binding SRP family. FtsY subfamily. As to quaternary structure, part of the signal recognition particle protein translocation system, which is composed of SRP and FtsY. Sensitive to endogenous proteolytic cleavage between residues 18 and 19 and between residues 86 and 87.

The protein resides in the cell membrane. It localises to the cytoplasm. The catalysed reaction is GTP + H2O = GDP + phosphate + H(+). Involved in targeting and insertion of nascent membrane proteins into the cytoplasmic membrane. Acts as a receptor for the complex formed by the signal recognition particle (SRP) and the ribosome-nascent chain (RNC). The protein is Signal recognition particle receptor FtsY of Thermus aquaticus.